Consider the following 257-residue polypeptide: Imidazole glycerol phosphate synthase subunit HisF (257 aa).

Catalysis depends on residues Asp12 and Asp131.

The protein belongs to the HisA/HisF family. As to quaternary structure, heterodimer of HisH and HisF.

The protein resides in the cytoplasm. The enzyme catalyses 5-[(5-phospho-1-deoxy-D-ribulos-1-ylimino)methylamino]-1-(5-phospho-beta-D-ribosyl)imidazole-4-carboxamide + L-glutamine = D-erythro-1-(imidazol-4-yl)glycerol 3-phosphate + 5-amino-1-(5-phospho-beta-D-ribosyl)imidazole-4-carboxamide + L-glutamate + H(+). It functions in the pathway amino-acid biosynthesis; L-histidine biosynthesis; L-histidine from 5-phospho-alpha-D-ribose 1-diphosphate: step 5/9. In terms of biological role, IGPS catalyzes the conversion of PRFAR and glutamine to IGP, AICAR and glutamate. The HisF subunit catalyzes the cyclization activity that produces IGP and AICAR from PRFAR using the ammonia provided by the HisH subunit. This Burkholderia pseudomallei (strain 1106a) protein is Imidazole glycerol phosphate synthase subunit HisF.